The chain runs to 34 residues: Photosystem II reaction center protein M (34 aa).

Residues 7–27 (GFIATILFVLVPTVFLLILYI) form a helical membrane-spanning segment.

Belongs to the PsbM family. PSII is composed of 1 copy each of membrane proteins PsbA, PsbB, PsbC, PsbD, PsbE, PsbF, PsbH, PsbI, PsbJ, PsbK, PsbL, PsbM, PsbT, PsbX, PsbY, PsbZ, Psb30/Ycf12, peripheral proteins PsbO, CyanoQ (PsbQ), PsbU, PsbV and a large number of cofactors. It forms dimeric complexes.

The protein localises to the cellular thylakoid membrane. Functionally, one of the components of the core complex of photosystem II (PSII). PSII is a light-driven water:plastoquinone oxidoreductase that uses light energy to abstract electrons from H(2)O, generating O(2) and a proton gradient subsequently used for ATP formation. It consists of a core antenna complex that captures photons, and an electron transfer chain that converts photonic excitation into a charge separation. This subunit is found at the monomer-monomer interface. The polypeptide is Photosystem II reaction center protein M (Picosynechococcus sp. (strain ATCC 27264 / PCC 7002 / PR-6) (Agmenellum quadruplicatum)).